Reading from the N-terminus, the 88-residue chain is Small ribosomal subunit protein uS17 (88 aa).

It belongs to the universal ribosomal protein uS17 family. In terms of assembly, part of the 30S ribosomal subunit.

Its function is as follows. One of the primary rRNA binding proteins, it binds specifically to the 5'-end of 16S ribosomal RNA. This is Small ribosomal subunit protein uS17 from Xylella fastidiosa (strain M23).